The chain runs to 209 residues: ATP synthase subunit O, mitochondrial (209 aa).

This sequence belongs to the ATPase delta chain family. F-type ATPases have 2 components, CF(1) - the catalytic core - and CF(0) - the membrane proton channel. CF(1) has five subunits: alpha(3), beta(3), gamma(1), delta(1), epsilon(1). CF(0) has three main subunits: a, b and c.

The protein resides in the mitochondrion. The protein localises to the mitochondrion inner membrane. Mitochondrial membrane ATP synthase (F(1)F(0) ATP synthase or Complex V) produces ATP from ADP in the presence of a proton gradient across the membrane which is generated by electron transport complexes of the respiratory chain. F-type ATPases consist of two structural domains, F(1) - containing the extramembraneous catalytic core and F(0) - containing the membrane proton channel, linked together by a central stalk and a peripheral stalk. During catalysis, ATP synthesis in the catalytic domain of F(1) is coupled via a rotary mechanism of the central stalk subunits to proton translocation. Part of the complex F(0) domain and the peripheric stalk, which acts as a stator to hold the catalytic alpha(3)beta(3) subcomplex and subunit a/ATP6 static relative to the rotary elements. This Drosophila melanogaster (Fruit fly) protein is ATP synthase subunit O, mitochondrial.